Reading from the N-terminus, the 712-residue chain is DNA ligase (712 aa).

The tract at residues 1–22 (MVQKNEHQGGQSQHSLFAAGPT) is disordered. NAD(+) is bound by residues 53 to 57 (DDQFD) and Asp-138. The active-site N6-AMP-lysine intermediate is Lys-140. Residues Arg-161, Glu-199, Lys-318, and Lys-342 each coordinate NAD(+). Cys-436, Cys-439, Cys-454, and Cys-459 together coordinate Zn(2+). Residues 612 to 631 (RGGRSGGGSSGSTGEGGLAS) are disordered. A compositionally biased stretch (gly residues) spans 614-630 (GRSGGGSSGSTGEGGLA). In terms of domain architecture, BRCT spans 629–712 (LASGPLAGKN…MLREAKAASE (84 aa)).

Belongs to the NAD-dependent DNA ligase family. LigA subfamily. The cofactor is Mg(2+). Requires Mn(2+) as cofactor.

The enzyme catalyses NAD(+) + (deoxyribonucleotide)n-3'-hydroxyl + 5'-phospho-(deoxyribonucleotide)m = (deoxyribonucleotide)n+m + AMP + beta-nicotinamide D-nucleotide.. DNA ligase that catalyzes the formation of phosphodiester linkages between 5'-phosphoryl and 3'-hydroxyl groups in double-stranded DNA using NAD as a coenzyme and as the energy source for the reaction. It is essential for DNA replication and repair of damaged DNA. This chain is DNA ligase, found in Desulfovibrio desulfuricans (strain ATCC 27774 / DSM 6949 / MB).